Consider the following 150-residue polypeptide: Auxin-binding protein 5 (150 aa).

An N-terminal signal peptide occupies residues 1-41 (MVRRRPATGAAQRPQLAAVGRGLLLASVLAAAASSLPVAES). Residues His-98, His-100, and Glu-104 each coordinate Zn(2+). Residue Asn-136 is glycosylated (N-linked (GlcNAc...) asparagine). His-147 contributes to the Zn(2+) binding site.

As to quaternary structure, homodimer.

It localises to the endoplasmic reticulum lumen. Its function is as follows. This is probably a receptor for the plant hormone auxin. The chain is Auxin-binding protein 5 (ABP5) from Zea mays (Maize).